We begin with the raw amino-acid sequence, 80 residues long: MPKRVLQGTVVSDKNDKTVVVRVERRFAHPLLKKTVRRSKRYKAHDENNMCKVGDVVLIQETRPISKDKCWVVVNENQAQ.

Belongs to the universal ribosomal protein uS17 family. As to quaternary structure, part of the 30S ribosomal subunit.

Its function is as follows. One of the primary rRNA binding proteins, it binds specifically to the 5'-end of 16S ribosomal RNA. In Chelativorans sp. (strain BNC1), this protein is Small ribosomal subunit protein uS17.